A 112-amino-acid polypeptide reads, in one-letter code: Protein lin-52 homolog (112 aa).

This sequence belongs to the lin-52 family. Component of the DREAM complex.

The protein is Protein lin-52 homolog (lin52) of Tetraodon nigroviridis (Spotted green pufferfish).